The chain runs to 109 residues: Cytochrome c6 (109 aa).

The N-terminal stretch at 1-25 (MFKNIIIVVAVTLCALFTNEHVVYS) is a signal peptide. Heme c contacts are provided by Cys-39, Cys-42, His-43, and Met-83.

It belongs to the cytochrome c family. PetJ subfamily. In terms of assembly, monomer. In terms of processing, binds 1 heme c group covalently per subunit.

It is found in the plastid. The protein localises to the chloroplast thylakoid lumen. Functionally, functions as an electron carrier between membrane-bound cytochrome b6-f and photosystem I in oxygenic photosynthesis. In Cyanidium caldarium (Red alga), this protein is Cytochrome c6 (petJ).